Here is a 268-residue protein sequence, read N- to C-terminus: Small ribosomal subunit protein eS1 (268 aa).

This sequence belongs to the eukaryotic ribosomal protein eS1 family. As to quaternary structure, component of the small ribosomal subunit. Mature ribosomes consist of a small (40S) and a large (60S) subunit. The 40S subunit contains about 33 different proteins and 1 molecule of RNA (18S). The 60S subunit contains about 49 different proteins and 3 molecules of RNA (28S, 5.8S and 5S).

It is found in the cytoplasm. The sequence is that of Small ribosomal subunit protein eS1 from Artemia franciscana (Brine shrimp).